The following is a 430-amino-acid chain: MNRIIKKAKTLKGEITPPPDKSISHRAVMFASLAKGQSRIKNFLWAKDPLSSLNAMKSLGVEITITDSKEIIVNGKGLHSLKESDNVIDCGNSGTTIRLLSGIVAGQRFLTVLTGDDSLRYRPMKRIINPLSLMGANIMGRAENKFPPIVIKGGFLKGISYEMPIASAQVKSAILLAGLYAKGETTLTEPHKSRDHTEKMLKNMGVNIIINDNTVKLSPVDHELNCFDITIPNDFSSAAFFIAGACLVPDSEILIKQVNLNETRTGFIEVLKNMGATIEIFNITEQGGEPVGDIFAKSSSELKGINVQGDIIPKLIDEFPILCVVATQAEGKTVIKDAKDLRAKESDRIKAMTSELKKMGVKIKEFEDGVEIEGPCKLIGTEVYSYKDHRIAMALSIAGVIAEGETTIKDANCVDISFPEFYSLLEMLQK.

Lysine 21, serine 22, and arginine 26 together coordinate 3-phosphoshikimate. Lysine 21 provides a ligand contact to phosphoenolpyruvate. Phosphoenolpyruvate is bound by residues glycine 94 and arginine 122. 3-phosphoshikimate is bound by residues serine 167, glutamine 169, aspartate 317, and lysine 344. Glutamine 169 is a phosphoenolpyruvate binding site. The active-site Proton acceptor is the aspartate 317. The phosphoenolpyruvate site is built by arginine 348 and arginine 390.

This sequence belongs to the EPSP synthase family. Monomer.

It localises to the cytoplasm. It catalyses the reaction 3-phosphoshikimate + phosphoenolpyruvate = 5-O-(1-carboxyvinyl)-3-phosphoshikimate + phosphate. It participates in metabolic intermediate biosynthesis; chorismate biosynthesis; chorismate from D-erythrose 4-phosphate and phosphoenolpyruvate: step 6/7. Catalyzes the transfer of the enolpyruvyl moiety of phosphoenolpyruvate (PEP) to the 5-hydroxyl of shikimate-3-phosphate (S3P) to produce enolpyruvyl shikimate-3-phosphate and inorganic phosphate. In Thermodesulfovibrio yellowstonii (strain ATCC 51303 / DSM 11347 / YP87), this protein is 3-phosphoshikimate 1-carboxyvinyltransferase.